We begin with the raw amino-acid sequence, 487 residues long: ATP synthase subunit beta (487 aa).

164–171 (GGAGVGKT) lines the ATP pocket.

It belongs to the ATPase alpha/beta chains family. As to quaternary structure, F-type ATPases have 2 components, CF(1) - the catalytic core - and CF(0) - the membrane proton channel. CF(1) has five subunits: alpha(3), beta(3), gamma(1), delta(1), epsilon(1). CF(0) has four main subunits: a(1), b(1), b'(1) and c(9-12).

Its subcellular location is the cellular thylakoid membrane. It carries out the reaction ATP + H2O + 4 H(+)(in) = ADP + phosphate + 5 H(+)(out). Its function is as follows. Produces ATP from ADP in the presence of a proton gradient across the membrane. The catalytic sites are hosted primarily by the beta subunits. This Synechococcus sp. (strain CC9605) protein is ATP synthase subunit beta.